The sequence spans 425 residues: Septin-7 (425 aa).

In terms of domain architecture, Septin-type G spans 28–297 (RGFEFTLMVV…ENYRSRKLAA (270 aa)). A G1 motif region spans residues 38–45 (GESGLGKS). Residues 38–45 (GESGLGKS), Thr-71, Gly-97, 176–184 (KADTLTPEE), Gly-231, and Arg-246 each bind GTP. The interval 94–97 (DTPG) is G3 motif. Residues 175–178 (AKAD) form a G4 motif region. Residues 324 to 421 (LAQMEEERRE…SRTLEKNKKK (98 aa)) adopt a coiled-coil conformation.

It belongs to the TRAFAC class TrmE-Era-EngA-EngB-Septin-like GTPase superfamily. Septin GTPase family. As to quaternary structure, monomer, and homodimer. Nucleotide binding promotes oligomerization. Can form heterooligomers with other family members and form filaments.

The protein resides in the cytoplasm. The protein localises to the chromosome. Its subcellular location is the centromere. It is found in the kinetochore. It localises to the cytoskeleton. The protein resides in the spindle. The protein localises to the cleavage furrow. Its subcellular location is the midbody. It is found in the cilium axoneme. Functionally, filament-forming cytoskeletal GTPase. Required for normal organization of the actin cytoskeleton. Required for normal progress through mitosis. Involved in cytokinesis. Plays a role in ciliogenesis and collective cell movements including convergent extension during gastrulation. Controls cell elongation but not polarization during convergent extension. The protein is Septin-7 of Xenopus laevis (African clawed frog).